The chain runs to 194 residues: Thymidine kinase (194 aa).

ATP-binding positions include 15–22 and 88–91; these read GCMFSGKT and DELH. The active-site Proton acceptor is the Glu89. Cys148, Cys151, Cys186, and Cys189 together coordinate Zn(2+).

Belongs to the thymidine kinase family. In terms of assembly, homotetramer.

The protein resides in the cytoplasm. The enzyme catalyses thymidine + ATP = dTMP + ADP + H(+). The polypeptide is Thymidine kinase (Roseiflexus castenholzii (strain DSM 13941 / HLO8)).